The primary structure comprises 326 residues: Protein BugT (326 aa).

The signal sequence occupies residues 1-25 (MNMTRLLAVIGIFIATAGIAAPVSA).

It belongs to the UPF0065 (bug) family.

It is found in the periplasm. This is Protein BugT (bugT) from Bordetella pertussis (strain Tohama I / ATCC BAA-589 / NCTC 13251).